The primary structure comprises 92 residues: Small ribosomal subunit protein uS19 (92 aa).

The protein belongs to the universal ribosomal protein uS19 family.

Its function is as follows. Protein S19 forms a complex with S13 that binds strongly to the 16S ribosomal RNA. The sequence is that of Small ribosomal subunit protein uS19 from Rickettsia bellii (strain OSU 85-389).